We begin with the raw amino-acid sequence, 410 residues long: Histone-lysine N-methyltransferase SUV39H2 (410 aa).

In terms of domain architecture, Chromo spans 47 to 105; the sequence is YEVEYLCDYKVVKDMEYYLVKWKGWPDSTNTWEPLQNLKCPLLLQQFSNDKHNYLSQVK. The Pre-SET domain occupies 189–247; sequence FGCSCTDCFFQKCCPAEAGVLLAYNKNQQIKIPPGTPIYECNSRCQCGPDCPNRIVQKG. Zn(2+)-binding residues include C191, C193, C196, C201, C202, C229, C233, C235, and C239. The SET domain maps to 250-373; that stretch reads YSLCIFRTSN…AGEELTFDYQ (124 aa). S-adenosyl-L-methionine-binding positions include 261-263 and 330-331; these read RGW and NH. C333 is a Zn(2+) binding site. An S-adenosyl-L-methionine-binding site is contributed by Y372. S381, S384, and S388 each carry phosphoserine. The Post-SET domain maps to 394–410; it reads VRTVCKCGAVTCRGYLN. C398 provides a ligand contact to Zn(2+). K399 is an S-adenosyl-L-methionine binding site. 2 residues coordinate Zn(2+): C400 and C405.

It belongs to the class V-like SAM-binding methyltransferase superfamily. Histone-lysine methyltransferase family. Suvar3-9 subfamily. In terms of assembly, interacts with SMAD5. The large PER complex involved in the histone methylation is composed of at least PER2, CBX3, TRIM28, SUV39H1 and/or SUV39H2; CBX3 mediates the formation of the complex. Post-translationally, ubiquitinated by the DCX(DCAF13) E3 ubiquitin ligase complex, leading to its degradation.

It is found in the nucleus. The protein localises to the chromosome. It localises to the centromere. The catalysed reaction is L-lysyl(9)-[histone H3] + 3 S-adenosyl-L-methionine = N(6),N(6),N(6)-trimethyl-L-lysyl(9)-[histone H3] + 3 S-adenosyl-L-homocysteine + 3 H(+). Histone methyltransferase that specifically trimethylates 'Lys-9' of histone H3 using monomethylated H3 'Lys-9' as substrate. H3 'Lys-9' trimethylation represents a specific tag for epigenetic transcriptional repression by recruiting HP1 (CBX1, CBX3 and/or CBX5) proteins to methylated histones. Mainly functions in heterochromatin regions, thereby playing a central role in the establishment of constitutive heterochromatin at pericentric and telomere regions. H3 'Lys-9' trimethylation is also required to direct DNA methylation at pericentric repeats. SUV39H1 is targeted to histone H3 via its interaction with RB1 and is involved in many processes, such as cell cycle regulation, transcriptional repression and regulation of telomere length. May participate in regulation of higher-order chromatin organization during spermatogenesis. Recruited by the large PER complex to the E-box elements of the circadian target genes such as PER2 itself or PER1, contributes to the conversion of local chromatin to a heterochromatin-like repressive state through H3 'Lys-9' trimethylation. This chain is Histone-lysine N-methyltransferase SUV39H2 (SUV39H2), found in Homo sapiens (Human).